A 144-amino-acid polypeptide reads, in one-letter code: HTH-type transcriptional regulator BilQ (144 aa).

The 134-residue stretch at 1–134 folds into the HTH marR-type domain; the sequence is MEQTFAYYTT…LFTLLQKLGK (134 aa). The H-T-H motif DNA-binding region spans 48 to 71; that stretch reads QRELAAAVRADEGYAARSVEKLLQ.

Functionally, transcription regulator that regulates expression of the bilirubin reductase operon (bilQ, bilR and bilS). The polypeptide is HTH-type transcriptional regulator BilQ (Clostridium symbiosum (strain WAL-14163)).